The chain runs to 342 residues: Dihydroorotase (342 aa).

Zn(2+) contacts are provided by His-13 and His-15. Residues 15–17 and Asn-41 each bind substrate; that span reads HLR. The Zn(2+) site is built by Lys-98, His-135, and His-173. Residue Lys-98 is modified to N6-carboxylysine. His-135 is a binding site for substrate. Leu-218 provides a ligand contact to substrate. Zn(2+) is bound at residue Asp-246. Residue Asp-246 is part of the active site. Residues His-250 and Ala-262 each contribute to the substrate site.

It belongs to the metallo-dependent hydrolases superfamily. DHOase family. Class II DHOase subfamily. Homodimer. The cofactor is Zn(2+).

The enzyme catalyses (S)-dihydroorotate + H2O = N-carbamoyl-L-aspartate + H(+). The protein operates within pyrimidine metabolism; UMP biosynthesis via de novo pathway; (S)-dihydroorotate from bicarbonate: step 3/3. Functionally, catalyzes the reversible cyclization of carbamoyl aspartate to dihydroorotate. This Vibrio campbellii (strain ATCC BAA-1116) protein is Dihydroorotase.